A 207-amino-acid polypeptide reads, in one-letter code: Large ribosomal subunit protein uL4 (207 aa).

Residues 48-89 (THKVKNRSEVSGGGRKPWRQKGTGRARQGSIRSPQWRGGGTV) form a disordered region.

It belongs to the universal ribosomal protein uL4 family. As to quaternary structure, part of the 50S ribosomal subunit.

Its function is as follows. One of the primary rRNA binding proteins, this protein initially binds near the 5'-end of the 23S rRNA. It is important during the early stages of 50S assembly. It makes multiple contacts with different domains of the 23S rRNA in the assembled 50S subunit and ribosome. Forms part of the polypeptide exit tunnel. This is Large ribosomal subunit protein uL4 from Bacillus cytotoxicus (strain DSM 22905 / CIP 110041 / 391-98 / NVH 391-98).